Reading from the N-terminus, the 506-residue chain is Cytochrome P450 52B1 (506 aa).

Cysteine 451 provides a ligand contact to heme.

Belongs to the cytochrome P450 family. The cofactor is heme.

Its function is as follows. Together with an NADPH cytochrome P450 the enzyme system catalyzes the terminal hydroxylation as the first step in the assimilation of alkanes and fatty acids. This Candida tropicalis (Yeast) protein is Cytochrome P450 52B1 (CYP52B1).